Here is a 1147-residue protein sequence, read N- to C-terminus: Sterol regulatory element-binding protein 1 (1147 aa).

The segment at 1–60 (MDEPPFSEAALEQALGEPCDLDAALLTDIEDMLQLINNQDSDFPGLFDPPYAGSGAGGTD) is transcriptional activation (acidic). At 1-487 (MDEPPFSEAA…HSRGMLDRSR (487 aa)) the chain is on the cytoplasmic side. The short motif at 27-35 (TDIEDMLQL) is the 9aaTAD element. The segment at 39–193 (QDSDFPGLFD…PLPGLPLASP (155 aa)) is disordered. Composition is skewed to low complexity over residues 62–71 (ASPDTSSPGS) and 78–95 (TLSS…AAPS). A compositionally biased stretch (pro residues) spans 96 to 105 (PLSPPQPAPT). Phosphoserine is present on residues S98 and S117. Residues 170-190 (GGFSTGSPPGNTQQPLPGLPL) are compositionally biased toward low complexity. The interaction with LMNA stretch occupies residues 234–497 (QQVPVLLQPH…LALCTLVFLC (264 aa)). The region spanning 323-373 (EKRTAHNAIEKRYRSSINDKIIELKDLVVGTEAKLNKSAVLRKAIDYIRFL) is the bHLH domain. Phosphoserine; by SIK1 is present on residues S337 and S338. Residues 373–394 (LQHSNQKLKQENLSLRTAVHKS) form a leucine-zipper region. At S396 the chain carries Phosphoserine; by AMPK. The residue at position 402 (S402) is a Phosphoserine; by SIK1. The interval 421–479 (VEDTLTPPPSDAGSPFQSSPLSLGSRGSGSGGSGSDSEPDSPVFEDSKAKPEQRPSLHS) is disordered. S457 is subject to Phosphoserine. Basic and acidic residues predominate over residues 465-479 (EDSKAKPEQRPSLHS). The chain crosses the membrane as a helical span at residues 488 to 508 (LALCTLVFLCLSCNPLASLLG). Topologically, residues 509–547 (ARGLPSPSDTTSVYHSPGRNVLGTESRDGPGWAQWLLPP) are lumenal. Residues 548-568 (VVWLLNGLLVLVSLVLLFVYG) form a helical membrane-spanning segment. At 569–1147 (EPVTRPHSGP…LGGGTTVTSS (579 aa)) the chain is on the cytoplasmic side. At S1060 the chain carries Phosphoserine.

This sequence belongs to the SREBP family. As to quaternary structure, forms a tight complex with SCAP, the SCAP-SREBP complex, in the endoplasmic reticulum membrane and the Golgi apparatus. Interacts with PAQR3; the interaction anchors the SCAP-SREBP complex to the Golgi apparatus in low cholesterol conditions. In terms of assembly, efficient DNA binding of the soluble transcription factor fragment requires dimerization with another bHLH protein. Interacts with CEBPA, the interaction produces a transcriptional synergy. Interacts with LMNA. Processed in the Golgi apparatus, releasing the protein from the membrane. At low cholesterol the SCAP-SREBP complex is recruited into COPII vesicles for export from the endoplasmic reticulum. In the Golgi, complex SREBPs are cleaved sequentially by site-1 (MBTPS1, S1P) and site-2 (MBTPS2, S2P) protease. The first cleavage by site-1 protease occurs within the luminal loop, the second cleavage by site-2 protease occurs within the first transmembrane domain, releasing the transcription factor from the Golgi membrane. Post-translationally, phosphorylated by AMPK, leading to suppress protein processing and nuclear translocation, and repress target gene expression. Phosphorylation at Ser-402 by SIK1 represses activity possibly by inhibiting DNA-binding. In terms of processing, SCAP-free SREBF1 is ubiquitinated by the BCR(ARMC5) complex, leading to its degradation. Ubiquitinated; the nuclear form has a rapid turnover and is rapidly ubiquitinated and degraded by the proteasome in the nucleus. In terms of tissue distribution, expressed in a wide variety of tissues, most abundant in liver and adrenal gland. In fetal tissues lung and liver shows highest expression. Predominates in hepatoma cell lines. Also expressed in kidney, brain, white fat, and muscle. As to expression, predominantly expressed in liver and adipose tissues. Also expressed in kidney, brain, white fat, and muscle.

Its subcellular location is the endoplasmic reticulum membrane. The protein resides in the golgi apparatus membrane. The protein localises to the cytoplasmic vesicle. It is found in the COPII-coated vesicle membrane. It localises to the nucleus. Its activity is regulated as follows. Activation by cleavage is down-regulated upon activation of SIRT3-dependent PRKAA1/AMPK-alpha signaling cascade which leads to inhibition of ATP-consuming lipogenesis to restore cellular energy balance. Precursor of the transcription factor form (Processed sterol regulatory element-binding protein 1), which is embedded in the endoplasmic reticulum membrane. Low sterol concentrations promote processing of this form, releasing the transcription factor form that translocates into the nucleus and activates transcription of genes involved in cholesterol biosynthesis and lipid homeostasis. Functionally, key transcription factor that regulates expression of genes involved in cholesterol biosynthesis and lipid homeostasis. Binds to the sterol regulatory element 1 (SRE-1) (5'-ATCACCCCAC-3'). Has dual sequence specificity binding to both an E-box motif (5'-ATCACGTGA-3') and to SRE-1 (5'-ATCACCCCAC-3'). Regulates the promoters of genes involved in cholesterol biosynthesis and the LDL receptor (LDLR) pathway of sterol regulation. Its function is as follows. Isoform expressed only in select tissues, which has higher transcriptional activity compared to SREBP-1C. Able to stimulate both lipogenic and cholesterogenic gene expression. Has a role in the nutritional regulation of fatty acids and triglycerides in lipogenic organs such as the liver. Required for innate immune response in macrophages by regulating lipid metabolism. In terms of biological role, predominant isoform expressed in most tissues, which has weaker transcriptional activity compared to isoform SREBP-1A. Primarily controls expression of lipogenic gene. Strongly activates global lipid synthesis in rapidly growing cells. The absence of Golgi proteolytic processing requirement makes this isoform constitutively active in transactivation of lipogenic gene promoters. This chain is Sterol regulatory element-binding protein 1, found in Homo sapiens (Human).